Reading from the N-terminus, the 236-residue chain is Phosphoribosylaminoimidazole-succinocarboxamide synthase (236 aa).

This sequence belongs to the SAICAR synthetase family.

It carries out the reaction 5-amino-1-(5-phospho-D-ribosyl)imidazole-4-carboxylate + L-aspartate + ATP = (2S)-2-[5-amino-1-(5-phospho-beta-D-ribosyl)imidazole-4-carboxamido]succinate + ADP + phosphate + 2 H(+). It functions in the pathway purine metabolism; IMP biosynthesis via de novo pathway; 5-amino-1-(5-phospho-D-ribosyl)imidazole-4-carboxamide from 5-amino-1-(5-phospho-D-ribosyl)imidazole-4-carboxylate: step 1/2. This is Phosphoribosylaminoimidazole-succinocarboxamide synthase (purC) from Lactococcus lactis subsp. lactis (strain IL1403) (Streptococcus lactis).